Consider the following 123-residue polypeptide: Large ribosomal subunit protein bL12 (123 aa).

It belongs to the bacterial ribosomal protein bL12 family. In terms of assembly, homodimer. Part of the ribosomal stalk of the 50S ribosomal subunit. Forms a multimeric L10(L12)X complex, where L10 forms an elongated spine to which 2 to 4 L12 dimers bind in a sequential fashion. Binds GTP-bound translation factors.

Its function is as follows. Forms part of the ribosomal stalk which helps the ribosome interact with GTP-bound translation factors. Is thus essential for accurate translation. This chain is Large ribosomal subunit protein bL12, found in Mycoplasmopsis synoviae (strain 53) (Mycoplasma synoviae).